Here is a 393-residue protein sequence, read N- to C-terminus: NAD(P)H-quinone oxidoreductase subunit H, chloroplastic (393 aa).

The protein belongs to the complex I 49 kDa subunit family. As to quaternary structure, NDH is composed of at least 16 different subunits, 5 of which are encoded in the nucleus.

The protein localises to the plastid. It is found in the chloroplast thylakoid membrane. It catalyses the reaction a plastoquinone + NADH + (n+1) H(+)(in) = a plastoquinol + NAD(+) + n H(+)(out). It carries out the reaction a plastoquinone + NADPH + (n+1) H(+)(in) = a plastoquinol + NADP(+) + n H(+)(out). Its function is as follows. NDH shuttles electrons from NAD(P)H:plastoquinone, via FMN and iron-sulfur (Fe-S) centers, to quinones in the photosynthetic chain and possibly in a chloroplast respiratory chain. The immediate electron acceptor for the enzyme in this species is believed to be plastoquinone. Couples the redox reaction to proton translocation, and thus conserves the redox energy in a proton gradient. The polypeptide is NAD(P)H-quinone oxidoreductase subunit H, chloroplastic (Ranunculus macranthus (Large buttercup)).